Here is a 353-residue protein sequence, read N- to C-terminus: Probable WRKY transcription factor 7 (353 aa).

The disordered stretch occupies residues 117–259 (VEEKKPETSS…SSRCHCSKKR (143 aa)). Over residues 158 to 176 (SHNNNNNQNQTKNGSSSSS) the composition is skewed to low complexity. Composition is skewed to polar residues over residues 184–204 (APSTINFAPSPPVSATNSFMS) and 213–229 (THMSSGFEFTNPSQLSG). A DNA-binding region (WRKY) is located at residues 275-341 (KMADIPSDEF…YEGDHNHALV (67 aa)).

Belongs to the WRKY group II-d family. In young, mature and senescent leaves.

Its subcellular location is the nucleus. Functionally, transcription factor. Interacts specifically with the W box (5'-(T)TGAC[CT]-3'), a frequently occurring elicitor-responsive cis-acting element. This is Probable WRKY transcription factor 7 (WRKY7) from Arabidopsis thaliana (Mouse-ear cress).